The primary structure comprises 430 residues: Serine hydroxymethyltransferase 1 (430 aa).

Residues Leu-132 and 136–138 contribute to the (6S)-5,6,7,8-tetrahydrofolate site; that span reads GHL. Lys-241 is modified (N6-(pyridoxal phosphate)lysine).

Belongs to the SHMT family. In terms of assembly, homodimer. Requires pyridoxal 5'-phosphate as cofactor.

Its subcellular location is the cytoplasm. The enzyme catalyses (6R)-5,10-methylene-5,6,7,8-tetrahydrofolate + glycine + H2O = (6S)-5,6,7,8-tetrahydrofolate + L-serine. It participates in one-carbon metabolism; tetrahydrofolate interconversion. Its pathway is amino-acid biosynthesis; glycine biosynthesis; glycine from L-serine: step 1/1. Its function is as follows. Catalyzes the reversible interconversion of serine and glycine with tetrahydrofolate (THF) serving as the one-carbon carrier. This reaction serves as the major source of one-carbon groups required for the biosynthesis of purines, thymidylate, methionine, and other important biomolecules. Also exhibits THF-independent aldolase activity toward beta-hydroxyamino acids, producing glycine and aldehydes, via a retro-aldol mechanism. This Bordetella parapertussis (strain 12822 / ATCC BAA-587 / NCTC 13253) protein is Serine hydroxymethyltransferase 1.